The chain runs to 186 residues: ADP-ribosylation factor-like protein 8B-A (186 aa).

Residues 1–19 (MLALINRLLDWFKSLFWKE) constitute an intramembrane region (note=Mediates targeting to membranes). GTP is bound by residues 29 to 35 (QYSGKTT), 71 to 75 (DIGGQ), and 130 to 133 (NKRD).

Belongs to the small GTPase superfamily. Arf family.

The protein localises to the late endosome membrane. It is found in the lysosome membrane. The protein resides in the cytoplasm. It localises to the cytoskeleton. Its subcellular location is the spindle. The protein localises to the early endosome membrane. Functionally, small GTPase which cycles between active GTP-bound and inactive GDP-bound states. In its active state, binds to a variety of effector proteins playing a key role in the regulation of lysosomal positioning which is important for nutrient sensing, natural killer cell-mediated cytotoxicity and antigen presentation. Along with its effectors, orchestrates lysosomal transport and fusion. In Danio rerio (Zebrafish), this protein is ADP-ribosylation factor-like protein 8B-A (arl8ba).